The chain runs to 302 residues: MALGTKHVLHLTKPSSRSSPLNIVIEPAVLFSILDHSTRKSENNQRVIGTLLGTRSEDGREIEIKSCFAVPHNESSEQVEVEMEYHRAMYHLHLKANPREVVVGWYATSPDLDAFSALIQNLYASPAEPGTAPLGTYPHPCVHLTVNTDVSSPLAIKTYVSSPVGITERLADSCAFVPTPFTIRDDEAVRSGLKAVAAPKNDPSRLASLFTDLQQLRRSTLELLSMIERVSDYVQNVIDGSSPANVAVGRYLMKCFSLIPCVEGQDFEKIFSSHLQDVLVVVYLANTLRTQVDIASRLNLLP.

Residues Ile-23–Gly-165 form the MPN domain. Ser-162 carries the post-translational modification Phosphoserine.

It belongs to the eIF-3 subunit F family. Component of the eukaryotic translation initiation factor 3 (eIF-3) complex. The eIF-3 complex appears to include tif32/eif3a, SPAC25G10.08/eif3b, tif33/eif3c, SPBC4C3.07/eif3f, tif35/eif3g and sum1/eif3i. This set of common subunits may also associate exclusively with either moe1/eif3d and int6/eif3e, or with SPAC821.05/eif3h and SPAC1751.03/eif3m. The eIF-3 complex may also include SPAC3A12.13c/eif3j.

It is found in the cytoplasm. Component of the eukaryotic translation initiation factor 3 (eIF-3) complex, which is involved in protein synthesis of a specialized repertoire of mRNAs and, together with other initiation factors, stimulates binding of mRNA and methionyl-tRNAi to the 40S ribosome. The eIF-3 complex specifically targets and initiates translation of a subset of mRNAs involved in cell proliferation. In Schizosaccharomyces pombe (strain 972 / ATCC 24843) (Fission yeast), this protein is Eukaryotic translation initiation factor 3 subunit F.